The primary structure comprises 385 residues: Benzoylsuccinyl-CoA thiolase subunit BbsB (385 aa).

Residue arginine 19 participates in CoA binding. Catalysis depends on cysteine 84, which acts as the Acyl-thioester intermediate. Positions 121, 193, 204, and 205 each coordinate CoA.

Belongs to the thiolase-like superfamily. Thiolase family. Heterotetramer composed of two BbsA subunits and two BbsB subunits. BbsB forms homodimeric subcomplexes. Both BbsA and BbsB are essential for enzymatic activity.

It catalyses the reaction (S)-2-benzoylsuccinyl-CoA + CoA = benzoyl-CoA + succinyl-CoA. It participates in xenobiotic degradation; toluene degradation. In terms of biological role, component of the BbsAB thiolase complex, which catalyzes the thiolytic cleavage of (S)-2-benzoylsuccinyl-CoA to succinyl-CoA and benzoyl-CoA, the final step of anaerobic toluene metabolism. The protein is Benzoylsuccinyl-CoA thiolase subunit BbsB of Thauera aromatica.